Here is a 430-residue protein sequence, read N- to C-terminus: RNA pseudouridine synthase 2, chloroplastic (430 aa).

The transit peptide at 1–43 (MLSISQLPSFSLTTAKSLRYPSSPSSSLSIFFSFFPKVSNFVR) directs the protein to the chloroplast. The S4 RNA-binding domain maps to 82–155 (IRLDSWISSR…IPLDIVYEDK (74 aa)). The disordered stretch occupies residues 195–222 (SNSEEDDDSDEETFSDDEEMTTSPSSYA). The span at 196 to 214 (NSEEDDDSDEETFSDDEEM) shows a compositional bias: acidic residues. Residue aspartate 234 is part of the active site.

It belongs to the pseudouridine synthase RluA family.

Its subcellular location is the plastid. The protein resides in the chloroplast. The catalysed reaction is a uridine in RNA = a pseudouridine in RNA. The polypeptide is RNA pseudouridine synthase 2, chloroplastic (Arabidopsis thaliana (Mouse-ear cress)).